The sequence spans 147 residues: Large ribosomal subunit protein uL13 (147 aa).

The protein belongs to the universal ribosomal protein uL13 family. Part of the 50S ribosomal subunit.

In terms of biological role, this protein is one of the early assembly proteins of the 50S ribosomal subunit, although it is not seen to bind rRNA by itself. It is important during the early stages of 50S assembly. In Lactobacillus johnsonii (strain CNCM I-12250 / La1 / NCC 533), this protein is Large ribosomal subunit protein uL13.